Here is a 1051-residue protein sequence, read N- to C-terminus: Ubiquitin carboxyl-terminal hydrolase 28 (1051 aa).

The interval 60 to 82 is disordered; the sequence is DQRVKEPSHDTTAAEPSEVEESA. At Ser-67 the chain carries Phosphoserine. The region spanning 97 to 116 is the UIM domain; the sequence is DNKDDLQAAIALSLLESPNI. Residue Lys-99 forms a Glycyl lysine isopeptide (Lys-Gly) (interchain with G-Cter in SUMO2) linkage. A compositionally biased stretch (basic and acidic residues) spans 121-135; sequence RDLNRAHEANSAETK. The segment at 121-140 is disordered; it reads RDLNRAHEANSAETKRSKRK. A USP domain is found at 162–655; the sequence is VGLKNVGNTC…SAYCLMYIND (494 aa). Cys-171 serves as the catalytic Nucleophile. Ser-376 bears the Phosphoserine mark. A disordered region spans residues 483 to 538; that stretch reads DLTPKESSSPESCSQNAGSTFSSPEDALPSSEGMNGPFTSPHSSLETPAPPAPRTV. Polar residues-rich tracts occupy residues 487–505 and 519–528; these read KESS…TFSS and PFTSPHSSLE. Phosphoserine is present on Ser-555. The Proton acceptor role is filled by His-605. Positions 703-735 are disordered; that stretch reads EEQSCKIPQMESSPNSSSQDFSTSQESPAVSSH. Low complexity predominate over residues 713–730; the sequence is ESSPNSSSQDFSTSQESP. At Ser-720 the chain carries Phosphoserine. Thr-1022 is subject to Phosphothreonine.

This sequence belongs to the peptidase C19 family. USP28 subfamily. As to quaternary structure, interacts with ZNF304. Interacts with PRKD1. Interacts with TP53BP1. Interacts with FBXW7; following DNA damage, dissociates from FBXW7 leading to degradation of MYC. Degraded upon nickel ion level or hypoxia exposure. Post-translationally, phosphorylated upon DNA damage at Ser-67 and Ser-720, by ATM or ATR. Phosphorylated by PRKD1.

The protein localises to the nucleus. It is found in the nucleoplasm. It catalyses the reaction Thiol-dependent hydrolysis of ester, thioester, amide, peptide and isopeptide bonds formed by the C-terminal Gly of ubiquitin (a 76-residue protein attached to proteins as an intracellular targeting signal).. Functionally, deubiquitinase involved in DNA damage response checkpoint and MYC proto-oncogene stability. Involved in DNA damage induced apoptosis by specifically deubiquitinating proteins of the DNA damage pathway such as CLSPN. Also involved in G2 DNA damage checkpoint, by deubiquitinating CLSPN, and preventing its degradation by the anaphase promoting complex/cyclosome (APC/C). In contrast, it does not deubiquitinate PLK1. Specifically deubiquitinates MYC in the nucleoplasm, leading to prevent MYC degradation by the proteasome: acts by specifically interacting with FBXW7 (FBW7alpha) in the nucleoplasm and counteracting ubiquitination of MYC by the SCF(FBXW7) complex. Deubiquitinates ZNF304, hence preventing ZNF304 degradation by the proteasome and leading to the activated KRAS-mediated promoter hypermethylation and transcriptional silencing of tumor suppressor genes (TSGs) in a subset of colorectal cancers (CRC) cells. This Mus musculus (Mouse) protein is Ubiquitin carboxyl-terminal hydrolase 28 (Usp28).